Reading from the N-terminus, the 157-residue chain is MSWTTPKRAFIGAATAEGGTKLNAFDNALLKLGIGNVNLVKLSSVIPAHIEWMEKVHDVPIGMLLPTVYAHIESDEPGMTISAALGVGISKNNEGGLIYEYSGYCTKEEAEEMVRKMVEEGFRQRGWELGEFKVASAEITVKDKPAAAIAVVVMFPY.

Residue Ser-44 is modified to Pyruvic acid (Ser).

The protein belongs to the PdaD family. It depends on pyruvate as a cofactor.

The enzyme catalyses L-arginine + H(+) = agmatine + CO2. This chain is Pyruvoyl-dependent arginine decarboxylase, found in Thermococcus kodakarensis (strain ATCC BAA-918 / JCM 12380 / KOD1) (Pyrococcus kodakaraensis (strain KOD1)).